We begin with the raw amino-acid sequence, 304 residues long: MSTDSDHTHPIPPAFQEYDTQKLRQSPAFGHGKHGIADLVVGREDNKPTRLLSDFLRVPYHLSGTLDSDPVDELITVCLQDPTGAITQGDRHSLTVTARPDAYAHITNQSASKVQTMKASYAHLEATLIAESGAYLEYLPEPTILNEDARCLQTTTVEMAPDATVIVGDVFVPDGLSAHEPFSFDHYHSRTDARVEQRLICADAVNLQPAQRDPRNLATIGEYTVIGNLYVFSPGADVEAIAEMVHQRLTDHEGAAGVSTLRNEAGITVRALGDRSTDVTAAIEAAWDETRRELLGVGAPLGDR.

This sequence belongs to the UreD family. As to quaternary structure, ureD, UreF and UreG form a complex that acts as a GTP-hydrolysis-dependent molecular chaperone, activating the urease apoprotein by helping to assemble the nickel containing metallocenter of UreC. The UreE protein probably delivers the nickel.

Its subcellular location is the cytoplasm. Functionally, required for maturation of urease via the functional incorporation of the urease nickel metallocenter. The sequence is that of Urease accessory protein UreD from Haloquadratum walsbyi (strain DSM 16790 / HBSQ001).